Reading from the N-terminus, the 366-residue chain is Chorismate synthase (366 aa).

Arginine 48 contacts NADP(+). Residues 125–127 (RSS), 241–242 (NA), glycine 285, 300–304 (KPTSS), and arginine 326 each bind FMN.

It belongs to the chorismate synthase family. Homotetramer. Requires FMNH2 as cofactor.

It carries out the reaction 5-O-(1-carboxyvinyl)-3-phosphoshikimate = chorismate + phosphate. Its pathway is metabolic intermediate biosynthesis; chorismate biosynthesis; chorismate from D-erythrose 4-phosphate and phosphoenolpyruvate: step 7/7. Functionally, catalyzes the anti-1,4-elimination of the C-3 phosphate and the C-6 proR hydrogen from 5-enolpyruvylshikimate-3-phosphate (EPSP) to yield chorismate, which is the branch point compound that serves as the starting substrate for the three terminal pathways of aromatic amino acid biosynthesis. This reaction introduces a second double bond into the aromatic ring system. The sequence is that of Chorismate synthase from Roseobacter denitrificans (strain ATCC 33942 / OCh 114) (Erythrobacter sp. (strain OCh 114)).